We begin with the raw amino-acid sequence, 420 residues long: tRNA(Ile)-lysidine synthase, chloroplastic (420 aa).

63-68 (SGGQDS) provides a ligand contact to ATP.

The protein belongs to the tRNA(Ile)-lysidine synthase family.

It localises to the plastid. Its subcellular location is the chloroplast. It catalyses the reaction cytidine(34) in tRNA(Ile2) + L-lysine + ATP = lysidine(34) in tRNA(Ile2) + AMP + diphosphate + H(+). Functionally, ligates lysine onto the cytidine present at position 34 of the AUA codon-specific tRNA(Ile) that contains the anticodon CAU, in an ATP-dependent manner. Cytidine is converted to lysidine, thus changing the amino acid specificity of the tRNA from methionine to isoleucine. This Zygnema circumcarinatum (Green alga) protein is tRNA(Ile)-lysidine synthase, chloroplastic.